Reading from the N-terminus, the 486-residue chain is Ribulose bisphosphate carboxylase large chain, chromosomal (486 aa).

Positions 126 and 176 each coordinate substrate. K178 (proton acceptor) is an active-site residue. K180 is a substrate binding site. Mg(2+) contacts are provided by K204, D206, and E207. Residue K204 is modified to N6-carboxylysine. The Proton acceptor role is filled by H296. Residues R297, H329, and S381 each contribute to the substrate site.

It belongs to the RuBisCO large chain family. Type I subfamily. In terms of assembly, heterohexadecamer of 8 large chains and 8 small chains; disulfide-linked. The disulfide link is formed within the large subunit homodimers. Mg(2+) is required as a cofactor. Post-translationally, the disulfide bond which can form between Cys-278 in the large chain dimeric partners within the hexadecamer appears to be associated with oxidative stress and protein turnover.

It catalyses the reaction 2 (2R)-3-phosphoglycerate + 2 H(+) = D-ribulose 1,5-bisphosphate + CO2 + H2O. It carries out the reaction D-ribulose 1,5-bisphosphate + O2 = 2-phosphoglycolate + (2R)-3-phosphoglycerate + 2 H(+). Functionally, ruBisCO catalyzes two reactions: the carboxylation of D-ribulose 1,5-bisphosphate, the primary event in carbon dioxide fixation, as well as the oxidative fragmentation of the pentose substrate. Both reactions occur simultaneously and in competition at the same active site. In Cupriavidus necator (strain ATCC 17699 / DSM 428 / KCTC 22496 / NCIMB 10442 / H16 / Stanier 337) (Ralstonia eutropha), this protein is Ribulose bisphosphate carboxylase large chain, chromosomal (cbbL1).